A 410-amino-acid chain; its full sequence is Neurotensin receptor type 2 (410 aa).

Topologically, residues 1–32 (METSSPRPPRPSSNPGLSLDARLGVDTRLWAK) are extracellular. The chain crosses the membrane as a helical span at residues 33–55 (VLFTALYALIWALGAAGNALSAH). The Cytoplasmic portion of the chain corresponds to 56-64 (VVLKARAGR). A helical transmembrane segment spans residues 65–87 (AGRLRHHVLSLALAGLLLLLVGV). Residues 88–109 (PVELYSFVWFHYPWVFGDLGCR) lie on the Extracellular side of the membrane. A disulfide bridge links C108 with C194. A helical transmembrane segment spans residues 110 to 131 (GYYFVHELCAYATVLSVAGLSA). At 132 to 154 (ERCLAVCQPLRARSLLTPRRTRW) the chain is on the cytoplasmic side. Residues 155–176 (LVALSWAASLGLALPMAVIMGQ) traverse the membrane as a helical segment. Residues 177 to 217 (KHELETADGEPEPASRVCTVLVSRTALQVFIQVNVLVSFVL) lie on the Extracellular side of the membrane. Residues 218-237 (PLALTAFLNGVTVSHLLALC) form a helical membrane-spanning segment. The Cytoplasmic portion of the chain corresponds to 238–297 (SQVPSTSTPGSSTPSRLELLSEEGLLSFIVWKKTFIQGGQVSLVRHKDVRRIRSLQRSVQ). The helical transmembrane segment at 298 to 318 (VLRAIVVMYVICWLPYHARRL) threads the bilayer. The Extracellular portion of the chain corresponds to 319–337 (MYCYVPDDAWTDPLYNFYH). Residues 338-358 (YFYMVTNTLFYVSSAVTPLLY) form a helical membrane-spanning segment. Topologically, residues 359–410 (NAVSSSFRKLFLEAVSSLCGEHHPMKRLPPKPQSPTLMDTASGFGDPPETRT) are cytoplasmic. A lipid anchor (S-palmitoyl cysteine) is attached at C377. The segment at 381–410 (HPMKRLPPKPQSPTLMDTASGFGDPPETRT) is disordered.

The protein belongs to the G-protein coupled receptor 1 family. Neurotensin receptor subfamily. NTSR2 sub-subfamily. As to expression, expressed in prostate (at protein level).

Its subcellular location is the cell membrane. Functionally, receptor for the tridecapeptide neurotensin. It is associated with G proteins that activate a phosphatidylinositol-calcium second messenger system. This Homo sapiens (Human) protein is Neurotensin receptor type 2 (NTSR2).